Reading from the N-terminus, the 224-residue chain is Ribonuclease HII (224 aa).

The region spanning 1 to 210 (MKIGGIDEAG…VRKIEESIKA (210 aa)) is the RNase H type-2 domain. A divalent metal cation is bound by residues D7, E8, and D105.

The protein belongs to the RNase HII family. Requires Mn(2+) as cofactor. It depends on Mg(2+) as a cofactor.

Its subcellular location is the cytoplasm. It carries out the reaction Endonucleolytic cleavage to 5'-phosphomonoester.. Functionally, endonuclease that specifically degrades the RNA of RNA-DNA hybrids. This Pyrococcus furiosus (strain ATCC 43587 / DSM 3638 / JCM 8422 / Vc1) protein is Ribonuclease HII.